Consider the following 428-residue polypeptide: Putative gustatory receptor 2a (428 aa).

The Cytoplasmic portion of the chain corresponds to 1–40 (MDTLRALEPLHRACQVCNLWPWRLAPPPDSEGILLRRSRW). Residues 41–61 (LELYGWTVLIAATSFTVYGLF) traverse the membrane as a helical segment. Residues 62–145 (QESSVEEKQD…INMRRQTSRR (84 aa)) lie on the Extracellular side of the membrane. Residues 146–166 (AVWILWGYAVSQLLILGAKLL) traverse the membrane as a helical segment. At 167-173 (SRGDRFP) the chain is on the cytoplasmic side. A helical membrane pass occupies residues 174–194 (IYWISYLLPLLVCGLRYFQIF). An N-linked (GlcNAc...) asparagine glycan is attached at Asn195. Residues 195–250 (NATQLVRQRLDVLLVALQQLQLHQKGPAVDTVLEEQEDLEEAAMDRLIAVRLVYQR) are Extracellular-facing. A helical transmembrane segment spans residues 251–271 (VWALVALLNRCYGLSMLMQVG). Topologically, residues 272–300 (NDFLAITSNCYWMFLNFRQSAASPFDILQ) are cytoplasmic. The helical transmembrane segment at 301–321 (IVASGVWSAPHLGNVLVLSLL) threads the bilayer. Residues 322–349 (CDRTAQCASRLALCLHQVSVDLRNESHN) are Extracellular-facing. A glycan (N-linked (GlcNAc...) asparagine) is linked at Asn345. The helical transmembrane segment at 350 to 370 (ALVGTLVRYCAPLIILVPLQI) threads the bilayer. The Cytoplasmic portion of the chain corresponds to 371-395 (TQFSLQLLHQRLHFSAAGFFNVDCT). A helical membrane pass occupies residues 396-416 (LLYTIVGATTTYLIILIQFHM). Residues 417–428 (SESTIGSDSNGQ) lie on the Extracellular side of the membrane.

It belongs to the insect chemoreceptor superfamily. Gustatory receptor (GR) family. Gr2a subfamily. In terms of tissue distribution, expressed in neurons of the terminal external chemosensory organ, the dorsal external chemosensory organ, as well as in the dorsal pharyngeal sense organ of larvae.

It localises to the cell membrane. Functionally, probable gustatory receptor which mediates acceptance or avoidance behavior, depending on its not yet determined substrates. This is Putative gustatory receptor 2a (Gr2a) from Drosophila melanogaster (Fruit fly).